We begin with the raw amino-acid sequence, 339 residues long: Lipoyl synthase (339 aa).

Positions 13-35 (RPKLDAPARPRHPEKAHRPDTAI) are disordered. Positions 68, 73, 79, 94, 98, 101, and 307 each coordinate [4Fe-4S] cluster. The Radical SAM core domain occupies 80 to 296 (WEKRHATFMI…ETTAYAKGFL (217 aa)).

Belongs to the radical SAM superfamily. Lipoyl synthase family. The cofactor is [4Fe-4S] cluster.

The protein localises to the cytoplasm. The catalysed reaction is [[Fe-S] cluster scaffold protein carrying a second [4Fe-4S](2+) cluster] + N(6)-octanoyl-L-lysyl-[protein] + 2 oxidized [2Fe-2S]-[ferredoxin] + 2 S-adenosyl-L-methionine + 4 H(+) = [[Fe-S] cluster scaffold protein] + N(6)-[(R)-dihydrolipoyl]-L-lysyl-[protein] + 4 Fe(3+) + 2 hydrogen sulfide + 2 5'-deoxyadenosine + 2 L-methionine + 2 reduced [2Fe-2S]-[ferredoxin]. Its pathway is protein modification; protein lipoylation via endogenous pathway; protein N(6)-(lipoyl)lysine from octanoyl-[acyl-carrier-protein]: step 2/2. Its function is as follows. Catalyzes the radical-mediated insertion of two sulfur atoms into the C-6 and C-8 positions of the octanoyl moiety bound to the lipoyl domains of lipoate-dependent enzymes, thereby converting the octanoylated domains into lipoylated derivatives. The chain is Lipoyl synthase from Methylorubrum extorquens (strain PA1) (Methylobacterium extorquens).